We begin with the raw amino-acid sequence, 806 residues long: Leucine--tRNA ligase (806 aa).

The short motif at 38–48 (PYPSGEIHMGH) is the 'HIGH' region element. The 'KMSKS' region signature appears at 572–576 (KMSKS). Lys-575 lines the ATP pocket.

Belongs to the class-I aminoacyl-tRNA synthetase family.

The protein localises to the cytoplasm. The catalysed reaction is tRNA(Leu) + L-leucine + ATP = L-leucyl-tRNA(Leu) + AMP + diphosphate. This is Leucine--tRNA ligase from Helicobacter pylori (strain ATCC 700392 / 26695) (Campylobacter pylori).